Here is a 339-residue protein sequence, read N- to C-terminus: Hairy/enhancer-of-split related with YRPW motif protein 2 (339 aa).

Positions Met-1–Arg-52 are disordered. Residues Thr-8–Ile-18 show a composition bias toward acidic residues. Over residues Ser-22–Ile-46 the composition is skewed to polar residues. Positions Met-47–Ala-116 are transcriptional repression and interaction with NCOR1 and SIN3A. The region spanning Ala-48–Leu-103 is the bHLH domain. The Orange domain maps to Met-122 to Leu-157. The disordered stretch occupies residues Ser-310–Phe-339. A compositionally biased stretch (polar residues) spans Gln-318–Pro-328. Residues Tyr-329–Trp-332 carry the YQPW motif motif.

It belongs to the HEY family. As to quaternary structure, may self-associate. Interacts with ARNT. Interacts with GATA4, GATA6, HES1 and HEYL. Interacts with HDAC1, NCOR1 and SIN3A. As to expression, highly expressed in the aorta, lower expression detected in the heart, brain, kidney, lung, muscle, ovary and testis.

Its subcellular location is the nucleus. Transcriptional repressor which functions as a downstream effector of Notch signaling in cardiovascular development. Specifically required for the Notch-induced endocardial epithelial to mesenchymal transition, which is itself criticial for cardiac valve and septum development. May be required in conjunction with HEY1 to specify arterial cell fate or identity. Promotes maintenance of neuronal precursor cells and glial versus neuronal fate specification. Binds preferentially to the canonical E box sequence 5'-CACGTG-3'. Represses transcription by the cardiac transcriptional activators GATA4 and GATA6 and by the neuronal bHLH factors ASCL1/MASH1 and NEUROD4/MATH3. This Mus musculus (Mouse) protein is Hairy/enhancer-of-split related with YRPW motif protein 2 (Hey2).